The following is a 252-amino-acid chain: 5'-nucleotidase SurE (252 aa).

Positions 8, 9, 39, and 91 each coordinate a divalent metal cation.

It belongs to the SurE nucleotidase family. The cofactor is a divalent metal cation.

It is found in the cytoplasm. It catalyses the reaction a ribonucleoside 5'-phosphate + H2O = a ribonucleoside + phosphate. Its function is as follows. Nucleotidase that shows phosphatase activity on nucleoside 5'-monophosphates. In Bordetella pertussis (strain Tohama I / ATCC BAA-589 / NCTC 13251), this protein is 5'-nucleotidase SurE.